The chain runs to 101 residues: Large ribosomal subunit protein uL23 (101 aa).

The protein belongs to the universal ribosomal protein uL23 family. Part of the 50S ribosomal subunit. Contacts protein L29, and trigger factor when it is bound to the ribosome.

Functionally, one of the early assembly proteins it binds 23S rRNA. One of the proteins that surrounds the polypeptide exit tunnel on the outside of the ribosome. Forms the main docking site for trigger factor binding to the ribosome. The sequence is that of Large ribosomal subunit protein uL23 from Pseudarthrobacter chlorophenolicus (strain ATCC 700700 / DSM 12829 / CIP 107037 / JCM 12360 / KCTC 9906 / NCIMB 13794 / A6) (Arthrobacter chlorophenolicus).